We begin with the raw amino-acid sequence, 1334 residues long: Aldehyde oxidase 3 (1334 aa).

The 2Fe-2S ferredoxin-type domain maps to 8–95; it reads DELIFFVNGK…GAAVTTVEGI (88 aa). 4 residues coordinate [2Fe-2S] cluster: C47, C52, C55, and C77. Residue Q116 participates in Mo-molybdopterin binding. Residues C117, C120, C152, and C154 each contribute to the [2Fe-2S] cluster site. In terms of domain architecture, FAD-binding PCMH-type spans 236–421; that stretch reads FRGERTTWIA…ISVFVPLSRK (186 aa). 264–271 provides a ligand contact to FAD; the sequence is LVIGNTCL. Phosphoserine is present on S320. Residues S354, H358, D367, and L411 each contribute to the FAD site. Residues G801, L1042, and Q1198 each coordinate Mo-molybdopterin. The active-site Proton acceptor; for azaheterocycle hydroxylase activity is E1265.

Belongs to the xanthine dehydrogenase family. Homodimer. [2Fe-2S] cluster serves as cofactor. The cofactor is FAD. Mo-molybdopterin is required as a cofactor.

The protein localises to the cytoplasm. The enzyme catalyses an aldehyde + O2 + H2O = a carboxylate + H2O2 + H(+). In terms of biological role, oxidase with broad substrate specificity, oxidizing aromatic azaheterocycles, such as N1-methylnicotinamide and phthalazine, as well as aldehydes, such as benzaldehyde, retinal and pyridoxal. Plays a key role in the metabolism of xenobiotics and drugs containing aromatic azaheterocyclic substituents. Is probably involved in the regulation of reactive oxygen species homeostasis. Is a prominent source of superoxide generation via the one-electron reduction of molecular oxygen. Also catalyzes nitric oxide (NO) production; under anaerobic conditions, reduces nitrite to NO with NADH or aldehyde as electron donor, but under aerobic conditions, NADH is the preferred substrate. These reactions may be catalyzed by several isozymes. This is Aldehyde oxidase 3 (Aox3) from Rattus norvegicus (Rat).